The chain runs to 162 residues: MRIIFLLIFLACAGLIGYALYLQLMDGLLPCPLCIFQRIAYWLIGITALFTFIHNPQSLGQHIYYGLIILFSLAGAIVAGRQAWLIRFPEAFECGISPEEAFLNGLPLAQWWPNMFEANGDCNDGTWQFLSLTLPDWSLLIFAAFGIIAGLLWHKKYNSINQ.

At 1–4 (MRII) the chain is on the cytoplasmic side. A helical membrane pass occupies residues 5–21 (FLLIFLACAGLIGYALY). Residues 22-39 (LQLMDGLLPCPLCIFQRI) lie on the Periplasmic side of the membrane. Cysteine 31 and cysteine 34 are oxidised to a cystine. A helical transmembrane segment spans residues 40–56 (AYWLIGITALFTFIHNP). Topologically, residues 57–62 (QSLGQH) are cytoplasmic. A helical membrane pass occupies residues 63–80 (IYYGLIILFSLAGAIVAG). Over 81 to 136 (RQAWLIRFPEAFECGISPEEAFLNGLPLAQWWPNMFEANGDCNDGTWQFLSLTLPD) the chain is Periplasmic. Cysteine 94 and cysteine 122 are disulfide-bonded. The helical transmembrane segment at 137–155 (WSLLIFAAFGIIAGLLWHK) threads the bilayer. Residues 156 to 162 (KYNSINQ) are Cytoplasmic-facing.

This sequence belongs to the DsbB family.

It is found in the cell inner membrane. Its function is as follows. Required for disulfide bond formation in some periplasmic proteins. Acts by oxidizing the DsbA protein. This Nitrosomonas eutropha (strain DSM 101675 / C91 / Nm57) protein is Disulfide bond formation protein B.